The chain runs to 426 residues: UDP-N-acetylglucosamine 1-carboxyvinyltransferase (426 aa).

Position 22–23 (22–23 (KN)) interacts with phosphoenolpyruvate. A UDP-N-acetyl-alpha-D-glucosamine-binding site is contributed by R94. Residue C118 is the Proton donor of the active site. Residue C118 is modified to 2-(S-cysteinyl)pyruvic acid O-phosphothioketal. UDP-N-acetyl-alpha-D-glucosamine contacts are provided by residues 123 to 127 (RPVDL), D309, and I331.

This sequence belongs to the EPSP synthase family. MurA subfamily.

It localises to the cytoplasm. The enzyme catalyses phosphoenolpyruvate + UDP-N-acetyl-alpha-D-glucosamine = UDP-N-acetyl-3-O-(1-carboxyvinyl)-alpha-D-glucosamine + phosphate. It participates in cell wall biogenesis; peptidoglycan biosynthesis. In terms of biological role, cell wall formation. Adds enolpyruvyl to UDP-N-acetylglucosamine. The sequence is that of UDP-N-acetylglucosamine 1-carboxyvinyltransferase from Paracoccus denitrificans (strain Pd 1222).